Reading from the N-terminus, the 184-residue chain is Tumor necrosis factor alpha-induced protein 8-like protein 2 (184 aa).

Serine 3 bears the Phosphoserine mark.

The protein belongs to the TNFAIP8 family. TNFAIP8L2 subfamily. May interact with CASP8; however, such result is unclear since could not reproduce the interaction with CASP8. Interacts with RAC1. In terms of processing, phosphorylated by TAK1/MAP3K7; this phosphorylation triggers association with BTRC and subsequent ubiquitination and degradation. Ubiquitinated in a BTRC-depdent manner; leading to degradation mediated through the proteasome pathway.

The protein resides in the cytoplasm. It is found in the nucleus. Its subcellular location is the lysosome. In terms of biological role, acts as a negative regulator of innate and adaptive immunity by maintaining immune homeostasis. Plays a regulatory role in the Toll-like signaling pathway by determining the strength of LPS-induced signaling and gene expression. Inhibits TCR-mediated T-cell activation and negatively regulate T-cell function to prevent hyperresponsiveness. Also inhibits autolysosome formation via negatively modulating MTOR activation by interacting with RAC1 and promoting the disassociation of the RAC1-MTOR complex. Plays an essential role in NK-cell biology by acting as a checkpoint and displaying an expression pattern correlating with NK-cell maturation process and by negatively regulating NK-cell maturation and antitumor immunity. Mechanistically, suppresses IL-15-triggered mTOR activity in NK-cells. This chain is Tumor necrosis factor alpha-induced protein 8-like protein 2 (Tnfaip8l2), found in Rattus norvegicus (Rat).